A 367-amino-acid polypeptide reads, in one-letter code: Ferrochelatase (367 aa).

Histidine 213 and glutamate 294 together coordinate Fe cation.

The protein belongs to the ferrochelatase family.

It localises to the cytoplasm. The catalysed reaction is heme b + 2 H(+) = protoporphyrin IX + Fe(2+). Its pathway is porphyrin-containing compound metabolism; protoheme biosynthesis; protoheme from protoporphyrin-IX: step 1/1. Catalyzes the ferrous insertion into protoporphyrin IX. The protein is Ferrochelatase of Polaromonas sp. (strain JS666 / ATCC BAA-500).